The primary structure comprises 112 residues: Nitrogenase iron-iron protein delta chain (112 aa).

As to quaternary structure, hexamer of two alpha, two beta, and two delta chains. Requires iron-sulfur cluster as cofactor.

The enzyme catalyses N2 + 8 reduced [2Fe-2S]-[ferredoxin] + 16 ATP + 16 H2O = H2 + 8 oxidized [2Fe-2S]-[ferredoxin] + 2 NH4(+) + 16 ADP + 16 phosphate + 6 H(+). In terms of biological role, the key enzymatic reactions in nitrogen fixation are catalyzed by the nitrogenase complex, which has 2 components: the iron protein (component 2) and a component 1 which is either a molybdenum-iron protein, a vanadium-iron, or an iron-iron protein. The protein is Nitrogenase iron-iron protein delta chain (anfG) of Azomonas macrocytogenes (Azotobacter macrocytogenes).